A 322-amino-acid chain; its full sequence is CXXC-type zinc finger protein 5 (322 aa).

Gly residues predominate over residues 1–10 (MSSLGGGSQD). Residues 1–100 (MSSLGGGSQD…SGGGSMMGGE (100 aa)) form a disordered region. Low complexity-rich tracts occupy residues 11–20 (AGGSSSSSTN) and 28–52 (SGPK…VADD). The residue at position 53 (T53) is a Phosphothreonine. The span at 87–97 (SSGGSGGGSMM) shows a compositional bias: gly residues. Residues 256–297 (GKKKRKRCGMCAPCRRRINCEQCSSCRNRKTGHQICKFRKCE) form a CXXC-type zinc finger. A Nuclear localization signal motif is present at residues 257–262 (KKKRKR). The Zn(2+) site is built by C263, C266, C269, C275, C278, C281, C291, and C296.

As to quaternary structure, interacts with DVL1. Interacts with RBPJ.

It localises to the nucleus. The protein localises to the cytoplasm. May indirectly participate in activation of the NF-kappa-B and MAPK pathways. Acts as a mediator of BMP4-mediated modulation of canonical Wnt signaling activity in neural stem cells. Required for DNA damage-induced ATM phosphorylation, p53 activation and cell cycle arrest. Involved in myelopoiesis. Binds to the oxygen responsive element of COX4I2 and represses its transcription under hypoxia conditions (4% oxygen), as well as normoxia conditions (20% oxygen). May repress COX4I2 transactivation induced by CHCHD2 and RBPJ. Binds preferentially to DNA containing cytidine-phosphate-guanosine (CpG) dinucleotides over CpH (H=A, T, and C), hemimethylated-CpG and hemimethylated-hydroxymethyl-CpG. The sequence is that of CXXC-type zinc finger protein 5 (CXXC5) from Pongo abelii (Sumatran orangutan).